The chain runs to 192 residues: Density-regulated protein homolog (192 aa).

Positions 62-116 are disordered; the sequence is GLEISDEPAADGDEKKKQKRGGKGSKTGAAAAQAAASGGKKKGGGPQKVTLQREP. Residues 87–99 are compositionally biased toward low complexity; sequence KTGAAAAQAAASG. Residues 117–176 enclose the SUI1 domain; sequence RGKKSVTVIKGLATFDIDLKVASKLFAQKFACGSSVTGADEIVIQGDVKDDLLDLIPEKW.

This sequence belongs to the DENR family.

The sequence is that of Density-regulated protein homolog from Caenorhabditis elegans.